Consider the following 206-residue polypeptide: Transcription elongation factor A protein-like 5 (206 aa).

Over residues Met-1–Asp-26 the composition is skewed to basic and acidic residues. The segment at Met-1–Val-206 is disordered. The segment covering Glu-27 to Pro-42 has biased composition (acidic residues). A compositionally biased stretch (basic and acidic residues) spans Asp-43–Asp-56. Residues Glu-57–Gly-70 are compositionally biased toward acidic residues. 4 stretches are compositionally biased toward basic and acidic residues: residues Asn-71 to Ser-86, Ala-102 to Pro-113, Asp-121 to Arg-160, and Gly-196 to Val-206.

This sequence belongs to the TFS-II family. TFA subfamily.

Its subcellular location is the nucleus. Its function is as follows. May be involved in transcriptional regulation. In Homo sapiens (Human), this protein is Transcription elongation factor A protein-like 5 (TCEAL5).